A 125-amino-acid chain; its full sequence is Holo-[acyl-carrier-protein] synthase (125 aa).

Residues D8 and E57 each coordinate Mg(2+).

This sequence belongs to the P-Pant transferase superfamily. AcpS family. The cofactor is Mg(2+).

It is found in the cytoplasm. The enzyme catalyses apo-[ACP] + CoA = holo-[ACP] + adenosine 3',5'-bisphosphate + H(+). Its function is as follows. Transfers the 4'-phosphopantetheine moiety from coenzyme A to a Ser of acyl-carrier-protein. The protein is Holo-[acyl-carrier-protein] synthase of Nitrosomonas europaea (strain ATCC 19718 / CIP 103999 / KCTC 2705 / NBRC 14298).